Reading from the N-terminus, the 722-residue chain is Phenylalanine ammonia-lyase lenB (722 aa).

Tyr83 acts as the Proton donor/acceptor in catalysis. Positions 117–136 (LPTDRSSSRPSSRYPHGLRS) are disordered. A cross-link (5-imidazolinone (Ala-Gly)) is located at residues 190–192 (ASG). 2,3-didehydroalanine (Ser) is present on Ser191. Asn247, Gln334, Arg340, Asn370, Lys441, Glu469, and Asn472 together coordinate (E)-cinnamate.

This sequence belongs to the PAL/histidase family. In terms of processing, contains an active site 4-methylidene-imidazol-5-one (MIO), which is formed autocatalytically by cyclization and dehydration of residues Ala-Ser-Gly.

The catalysed reaction is L-phenylalanine = (E)-cinnamate + NH4(+). It participates in alkaloid biosynthesis. Functionally, phenylalanine ammonia-lyase; part of the gene cluster that mediates the biosynthesis of the ergot alkaloids lentopeptins A and B. Within the pathway, lenB provides the cinnamic acid starter unit for the synthesis of the N-acyldiketopiperazine intermediate by the NRPS lenA. Cinnamic acid is condensed with the Ala-Val-Ala peptide chain by lenA which leads to the N-acyldiketopiperazine intermediate which in turn is converted into lentopeptins A and B by the cytochrome P450 monooxygenase lenC. This Aspergillus lentulus protein is Phenylalanine ammonia-lyase lenB.